We begin with the raw amino-acid sequence, 267 residues long: MLKYLVALISMVLAVWTVPEWLTFPIYGNVVTVLESWLRQRVSEVSASSPGLLLTKEQLSLYNGGKNSKGLYLAILGQVFDVEKGRKHYGPGGGYHFFTGKDASRAFITGDFTEAGLSNDVSDFSESQIVALYDWLSFYQRDYTPVGKLIGRFYTETGQPTDALLHVEAFLSDGLKKKAQAQSEMQLYPSCNSEWSEASGGRVWCSTMSGGIHRDWVGVPRMLFTPGSGHSRCVCIRLSDPVHSENRNLREYTDCPPRAESCQIAKD.

A signal peptide spans 1-17; sequence MLKYLVALISMVLAVWT. The region spanning 53 to 150 is the Cytochrome b5 heme-binding domain; the sequence is LLTKEQLSLY…RDYTPVGKLI (98 aa).

It belongs to the cytochrome b5 family. MAPR subfamily.

The protein resides in the secreted. In terms of biological role, heme-binding protein which promotes neuronal but not astrocyte differentiation. This chain is Neuferricin (cyb5d2), found in Danio rerio (Zebrafish).